We begin with the raw amino-acid sequence, 67 residues long: Brevinin-1CDYc (67 aa).

The signal sequence occupies residues 1 to 22 (MFTLKKSLLLIFFLGTINLSLC). The propeptide occupies 23 to 45 (EEERNADEEERRDDPEERDVEVE). Cys-61 and Cys-67 are disulfide-bonded.

Belongs to the frog skin active peptide (FSAP) family. Brevinin subfamily. In terms of tissue distribution, expressed by the skin glands.

The protein localises to the secreted. Its function is as follows. Antimicrobial peptide. The chain is Brevinin-1CDYc from Rana huanrensis (Huanren frog).